The sequence spans 217 residues: Protein-L-isoaspartate O-methyltransferase (217 aa).

Serine 62 is a catalytic residue.

Belongs to the methyltransferase superfamily. L-isoaspartyl/D-aspartyl protein methyltransferase family.

Its subcellular location is the cytoplasm. It catalyses the reaction [protein]-L-isoaspartate + S-adenosyl-L-methionine = [protein]-L-isoaspartate alpha-methyl ester + S-adenosyl-L-homocysteine. Catalyzes the methyl esterification of L-isoaspartyl residues in peptides and proteins that result from spontaneous decomposition of normal L-aspartyl and L-asparaginyl residues. It plays a role in the repair and/or degradation of damaged proteins. In Trichlorobacter lovleyi (strain ATCC BAA-1151 / DSM 17278 / SZ) (Geobacter lovleyi), this protein is Protein-L-isoaspartate O-methyltransferase.